Consider the following 209-residue polypeptide: Uracil phosphoribosyltransferase (209 aa).

Residues R79, R104, and D131–S139 each bind 5-phospho-alpha-D-ribose 1-diphosphate. Uracil-binding positions include I194 and G199–A201. D200 is a 5-phospho-alpha-D-ribose 1-diphosphate binding site.

The protein belongs to the UPRTase family. Mg(2+) serves as cofactor.

The catalysed reaction is UMP + diphosphate = 5-phospho-alpha-D-ribose 1-diphosphate + uracil. The protein operates within pyrimidine metabolism; UMP biosynthesis via salvage pathway; UMP from uracil: step 1/1. Allosterically activated by GTP. Catalyzes the conversion of uracil and 5-phospho-alpha-D-ribose 1-diphosphate (PRPP) to UMP and diphosphate. The sequence is that of Uracil phosphoribosyltransferase from Halalkalibacterium halodurans (strain ATCC BAA-125 / DSM 18197 / FERM 7344 / JCM 9153 / C-125) (Bacillus halodurans).